The following is a 344-amino-acid chain: Serine/threonine-protein kinase ppk13 (344 aa).

ATP-binding positions include 38-46 and K61; that span reads LGEGGFAFV. Positions 76-344 constitute a Protein kinase domain; sequence MKEADYHRKF…LSKIDLQINQ (269 aa). Catalysis depends on H192, which acts as the Proton acceptor.

It belongs to the protein kinase superfamily. Ser/Thr protein kinase family.

It localises to the endoplasmic reticulum. The protein localises to the golgi apparatus. It catalyses the reaction L-seryl-[protein] + ATP = O-phospho-L-seryl-[protein] + ADP + H(+). The catalysed reaction is L-threonyl-[protein] + ATP = O-phospho-L-threonyl-[protein] + ADP + H(+). This chain is Serine/threonine-protein kinase ppk13 (ppk13), found in Schizosaccharomyces pombe (strain 972 / ATCC 24843) (Fission yeast).